The chain runs to 226 residues: Ribonuclease 3 (226 aa).

The region spanning 5–127 is the RNase III domain; the sequence is LERLQRALGY…IIGAIYLDAG (123 aa). Position 40 (Glu40) interacts with Mg(2+). Asp44 is a catalytic residue. Asp113 and Glu116 together coordinate Mg(2+). Glu116 is a catalytic residue. The DRBM domain maps to 154 to 224; that stretch reads DSKTRLQEYL…AKQALLALGV (71 aa).

Belongs to the ribonuclease III family. In terms of assembly, homodimer. Requires Mg(2+) as cofactor.

The protein localises to the cytoplasm. The catalysed reaction is Endonucleolytic cleavage to 5'-phosphomonoester.. Digests double-stranded RNA. Involved in the processing of primary rRNA transcript to yield the immediate precursors to the large and small rRNAs (23S and 16S). Processes some mRNAs, and tRNAs when they are encoded in the rRNA operon. Processes pre-crRNA and tracrRNA of type II CRISPR loci if present in the organism. The polypeptide is Ribonuclease 3 (Hahella chejuensis (strain KCTC 2396)).